Reading from the N-terminus, the 269-residue chain is MRRTSATLRGRARPRWRAGNTTPVPVNQTGTCAQLHPPPQGTLQVVRGDGTSLGTVLIFHCPSGHQMVGSGLLTCAWNGSTVDWSSGSPVCKAVPPHETFGFKVAVIASIVSCAIILLMSMAFLTCCLLKCVQKNERRRADRTAQLWYQLRGEDLETVQAAYLGLKGHNHNNSSSVGGGNGGPSGGGGKPGIQHSQAHDNHSFTTDPGDIREQAGVTHSVDKDPWTFRMGTPGPGGCSSSPGTYVMVHALNSAGLAPGNPGRPKVYLPG.

The interval Met-1 to Pro-23 is disordered. At Met-1–Lys-103 the chain is on the extracellular side. The 64-residue stretch at Gly-30–Ala-93 folds into the Sushi domain. 2 cysteine pairs are disulfide-bonded: Cys-32–Cys-75 and Cys-61–Cys-91. The helical transmembrane segment at Val-104–Leu-124 threads the bilayer. Residues Thr-125–Gly-269 are Cytoplasmic-facing. Residues Asn-171–Cys-237 are disordered. The segment covering Val-176–Pro-190 has biased composition (gly residues).

The protein localises to the cell membrane. The sequence is that of Sushi domain-containing protein 3 (Susd3) from Mus musculus (Mouse).